Reading from the N-terminus, the 412-residue chain is Subtilisin-like protease 6 (412 aa).

The signal sequence occupies residues 1 to 20; that stretch reads MGFITKAIPIVLAALSTVNG. A propeptide spanning residues 21 to 127 is cleaved from the precursor; sequence ARILEAGPHA…VRTTTNGTNL (107 aa). An Inhibitor I9 domain is found at 36–120; the sequence is KYIVVMKKDV…FIEPDFVVRT (85 aa). Residues 135-412 enclose the Peptidase S8 domain; sequence SWGLARVGSK…SKLIYNGSGK (278 aa). Catalysis depends on charge relay system residues Asp167 and His198. N-linked (GlcNAc...) asparagine glycans are attached at residues Asn252 and Asn264. Catalysis depends on Ser358, which acts as the Charge relay system. An N-linked (GlcNAc...) asparagine glycan is attached at Asn408.

This sequence belongs to the peptidase S8 family.

The protein resides in the secreted. In terms of biological role, secreted subtilisin-like serine protease with keratinolytic activity that contributes to pathogenicity. The polypeptide is Subtilisin-like protease 6 (SUB6) (Arthroderma benhamiae (strain ATCC MYA-4681 / CBS 112371) (Trichophyton mentagrophytes)).